Here is a 274-residue protein sequence, read N- to C-terminus: Diaminopimelate epimerase (274 aa).

Residues N11, Q44, and N64 each coordinate substrate. The active-site Proton donor is the C73. Substrate is bound by residues 74-75 (GN), N157, N190, and 208-209 (ER). C217 acts as the Proton acceptor in catalysis. 218–219 (GS) is a substrate binding site.

Belongs to the diaminopimelate epimerase family. Homodimer.

Its subcellular location is the cytoplasm. It carries out the reaction (2S,6S)-2,6-diaminopimelate = meso-2,6-diaminopimelate. It functions in the pathway amino-acid biosynthesis; L-lysine biosynthesis via DAP pathway; DL-2,6-diaminopimelate from LL-2,6-diaminopimelate: step 1/1. Its function is as follows. Catalyzes the stereoinversion of LL-2,6-diaminopimelate (L,L-DAP) to meso-diaminopimelate (meso-DAP), a precursor of L-lysine and an essential component of the bacterial peptidoglycan. This is Diaminopimelate epimerase from Photorhabdus laumondii subsp. laumondii (strain DSM 15139 / CIP 105565 / TT01) (Photorhabdus luminescens subsp. laumondii).